Reading from the N-terminus, the 163-residue chain is Anaerobic nitrite reductase HB1 (163 aa).

The region spanning 8–157 (VFTEEQEALV…LVAAIKIEMK (150 aa)) is the Globin domain. The Homodimerization motif lies at 41–45 (EIAPS). Positions 51, 65, 69, 99, 103, and 104 each coordinate heme b. The Homodimerization signature appears at 111-123 (DEHFEVTKFALLE).

It belongs to the plant globin family. In terms of assembly, homodimer. Heme b is required as a cofactor.

Its subcellular location is the cytoplasm. It localises to the nucleus. It catalyses the reaction Fe(III)-heme b-[protein] + nitric oxide + H2O = Fe(II)-heme b-[protein] + nitrite + 2 H(+). Phytoglobin that reduces nitrite to nitric oxide (NO) under anoxic conditions (e.g. during flooding or in waterlogged soil). May not function as an oxygen storage or transport protein. Has an unusually high affinity for O(2) through an hexacoordinate heme iron because of a very low dissociation constant. This is Anaerobic nitrite reductase HB1 from Gossypium hirsutum (Upland cotton).